A 60-amino-acid polypeptide reads, in one-letter code: Photosystem II reaction center protein L (60 aa).

The helical transmembrane segment at 39–59 threads the bilayer; that stretch reads SLYWGLLLIFVLAVLFSSYIF.

This sequence belongs to the PsbL family. In terms of assembly, PSII is composed of 1 copy each of membrane proteins PsbA, PsbB, PsbC, PsbD, PsbE, PsbF, PsbH, PsbI, PsbJ, PsbK, PsbL, PsbM, PsbT, PsbX, PsbY, PsbZ, Psb30/Ycf12, at least 3 peripheral proteins of the oxygen-evolving complex and a large number of cofactors. It forms dimeric complexes.

The protein localises to the plastid. Its subcellular location is the chloroplast thylakoid membrane. Its function is as follows. One of the components of the core complex of photosystem II (PSII). PSII is a light-driven water:plastoquinone oxidoreductase that uses light energy to abstract electrons from H(2)O, generating O(2) and a proton gradient subsequently used for ATP formation. It consists of a core antenna complex that captures photons, and an electron transfer chain that converts photonic excitation into a charge separation. This subunit is found at the monomer-monomer interface and is required for correct PSII assembly and/or dimerization. The chain is Photosystem II reaction center protein L from Oedogonium cardiacum (Filamentous green alga).